The following is a 292-amino-acid chain: F-box/LRR-repeat protein 15 (292 aa).

Positions 12-59 (LLDLPWEDVLIPHILCYLPLQHLVSLQRVSKQFHSLIQVYLTNCRTFD) constitute an F-box domain. LRR repeat units lie at residues 134–155 (HLQH…RSLA), 160–181 (GLQS…CYLA), 186–207 (KLRS…EEVA), 212–233 (GLEQ…RTLA), and 238–259 (KLQS…DPLR).

The protein belongs to the FBXL15 family. Part of the SCF (SKP1-CUL1-F-box) E3 ubiquitin-protein ligase complex SCF(FBXL15).

The protein localises to the cytoplasm. It participates in protein modification; protein ubiquitination. In terms of biological role, substrate recognition component of a SCF (SKP1-CUL1-F-box protein) E3 ubiquitin-protein ligase complex which mediates the ubiquitination and subsequent proteasomal degradation of target proteins. Acts as a positive regulator of the BMP signaling pathway. Required for dorsal/ventral pattern formation. In Dicentrarchus labrax (European seabass), this protein is F-box/LRR-repeat protein 15 (fbxl15).